The chain runs to 493 residues: Cytochrome c-552 (493 aa).

A signal peptide spans Met1–Gly25. Residue His116 coordinates heme c. Heme contacts are provided by Cys144, Cys147, and Lys148. Positions 182, 185, 186, 224, 227, and 228 each coordinate heme c. Residues Glu230, Tyr231, Lys276, and Gln278 each coordinate Ca(2+). Tyr231 serves as a coordination point for substrate. Residue His279 participates in substrate binding. Residues His290, Cys297, Cys300, His301, His315, Cys328, Cys331, His332, and His407 each contribute to the heme c site.

It belongs to the cytochrome c-552 family. It depends on Ca(2+) as a cofactor. Requires heme c as cofactor.

Its subcellular location is the periplasm. The enzyme catalyses 6 Fe(III)-[cytochrome c] + NH4(+) + 2 H2O = 6 Fe(II)-[cytochrome c] + nitrite + 8 H(+). Its pathway is nitrogen metabolism; nitrate reduction (assimilation). Catalyzes the reduction of nitrite to ammonia, consuming six electrons in the process. This Bacteroides fragilis (strain YCH46) protein is Cytochrome c-552.